The following is a 37-amino-acid chain: Dolichyl-diphosphooligosaccharide--protein glycosyltransferase subunit 4A (37 aa).

Residues 1–7 (MIDDQDL) lie on the Lumenal side of the membrane. A helical membrane pass occupies residues 8–28 (GFIANFLGIFIFALVIAYHYV). The Cytoplasmic portion of the chain corresponds to 29-37 (TADPKYEAT).

Belongs to the OST4 family. In terms of assembly, component of the oligosaccharyltransferase (OST) complex.

The protein localises to the endoplasmic reticulum membrane. In terms of biological role, subunit of the oligosaccharyl transferase (OST) complex that catalyzes the initial transfer of a defined glycan (Glc(3)Man(9)GlcNAc(2) in eukaryotes) from the lipid carrier dolichol-pyrophosphate to an asparagine residue within an Asn-X-Ser/Thr consensus motif in nascent polypeptide chains, the first step in protein N-glycosylation. N-glycosylation occurs cotranslationally and the complex associates with the Sec61 complex at the channel-forming translocon complex that mediates protein translocation across the endoplasmic reticulum (ER). All subunits are required for a maximal enzyme activity. This Arabidopsis thaliana (Mouse-ear cress) protein is Dolichyl-diphosphooligosaccharide--protein glycosyltransferase subunit 4A (OST4A).